Here is a 227-residue protein sequence, read N- to C-terminus: MDPIRACVFDAYGTLLDVNTAVMKHAHDIGGCAEELSSLWRQRQLEYSWTRTLMGRYADFWQLTTEALDFALESFGLLERTDLKNRLLDAYHELSAYPDAVGTLGALKAAGFTTAILSNGNNEMLRGALRAGNLTEALDQCISVDEIKIYKPDPRVYQFACDRLDVRPSEVCFVSSNAWDIGGAGAFGFNTVRINRINKPQEYSFAPQRHQLSSLSELPQLLLRLTQ.

D10 functions as the Nucleophile in the catalytic mechanism. An (S)-2-haloacid-binding positions include 11–12, R41, and 118–119; these read AY and SN. The interval 175–180 is important for catalytic activity; that stretch reads SSNAWD.

This sequence belongs to the HAD-like hydrolase superfamily. S-2-haloalkanoic acid dehalogenase family.

It carries out the reaction an (S)-2-haloacid + H2O = a (2R)-2-hydroxycarboxylate + a halide anion + H(+). The enzyme catalyses (S)-2-chloropropanoate + H2O = (R)-lactate + chloride + H(+). In terms of biological role, catalyzes the hydrolytic dehalogenation of small (S)-2-haloalkanoic acids to yield the corresponding (R)-2-hydroxyalkanoic acids. Acts on acids of short chain lengths, C(2) to C(4), with inversion of configuration at C-2. Active with 2-halogenated carboxylic acids and converts only the S-isomer (or L-isomer) of 2-chloropropionic acid with inversion of configuration to produce R-lactate (or D-isomer). The polypeptide is (S)-2-haloacid dehalogenase 1 (Pseudomonas sp. (strain CBS-3)).